The following is a 760-amino-acid chain: Molybdenum cofactor sulfurase 2 (760 aa).

At lysine 223 the chain carries N6-(pyridoxal phosphate)lysine. Residue cysteine 389 is part of the active site. The 151-residue stretch at 608 to 758 folds into the MOSC domain; the sequence is QSDDEARTLR…LHCGSPLQVV (151 aa).

It belongs to the class-V pyridoxal-phosphate-dependent aminotransferase family. MOCOS subfamily. Pyridoxal 5'-phosphate serves as cofactor.

The catalysed reaction is Mo-molybdopterin + L-cysteine + AH2 = thio-Mo-molybdopterin + L-alanine + A + H2O. Functionally, sulfurates the molybdenum cofactor. Sulfation of molybdenum is essential for xanthine dehydrogenase (XDH) and aldehyde oxidase (ADO) enzymes in which molybdenum cofactor is liganded by 1 oxygen and 1 sulfur atom in active form. This is Molybdenum cofactor sulfurase 2 from Culex quinquefasciatus (Southern house mosquito).